A 330-amino-acid chain; its full sequence is Autoinducer 2 import system permease protein LsrD (330 aa).

At 1-4 (MRIR) the chain is on the cytoplasmic side. A helical transmembrane segment spans residues 5-25 (YGWELALAALLVIEIVSFGAI). Residues 26–42 (NPRMLDLNMLLFSTSDF) are Periplasmic-facing. Residues 43-63 (ICIGIVALPLTMVIVSGGIDI) traverse the membrane as a helical segment. Residues 64 to 67 (SFGS) lie on the Cytoplasmic side of the membrane. A run of 2 helical transmembrane segments spans residues 68–88 (TIGL…PMPL) and 89–109 (AILL…GLII). Residues 110–115 (YTKVNP) lie on the Cytoplasmic side of the membrane. The chain crosses the membrane as a helical span at residues 116–136 (LVITLGTLYLFAGSALLLSGM). Residues 137 to 159 (AGATGYEGIGGFPMAFTDFANLD) are Periplasmic-facing. Residues 160–180 (VLGLPVPLIIFLICLLVFWLW) traverse the membrane as a helical segment. Topologically, residues 181–209 (LHKTHAGRNVFLIGQSPRVALYSAIPVNR) are cytoplasmic. Residues 210-230 (TLCALYAMTGLASAVAAVLLV) form a helical membrane-spanning segment. The Periplasmic segment spans residues 231–237 (SYFGSAR). 2 helical membrane passes run 238–258 (SDLG…GGAN) and 259–279 (IYGG…VGYL). Topologically, residues 280–285 (QQGLQM) are periplasmic. Residues 286 to 306 (AGVPNQVSSALSGALLIVVVV) traverse the membrane as a helical segment. At 307-330 (GRSVSLHRQQIKEWLARRANNPLP) the chain is on the cytoplasmic side.

The protein belongs to the binding-protein-dependent transport system permease family. AraH/RbsC subfamily. The complex is composed of two ATP-binding proteins (LsrA), two transmembrane proteins (LsrC and LsrD) and a solute-binding protein (LsrB).

The protein resides in the cell inner membrane. Part of the ABC transporter complex LsrABCD involved in autoinducer 2 (AI-2) import. Probably responsible for the translocation of the substrate across the membrane. The chain is Autoinducer 2 import system permease protein LsrD (lsrD) from Escherichia coli O157:H7.